A 917-amino-acid chain; its full sequence is Alanine--tRNA ligase (917 aa).

Zn(2+)-binding residues include H615, H619, C719, and H723.

This sequence belongs to the class-II aminoacyl-tRNA synthetase family. Zn(2+) serves as cofactor.

The protein localises to the cytoplasm. The enzyme catalyses tRNA(Ala) + L-alanine + ATP = L-alanyl-tRNA(Ala) + AMP + diphosphate. In terms of biological role, catalyzes the attachment of alanine to tRNA(Ala) in a two-step reaction: alanine is first activated by ATP to form Ala-AMP and then transferred to the acceptor end of tRNA(Ala). Also edits incorrectly charged Ser-tRNA(Ala) and Gly-tRNA(Ala) via its editing domain. This chain is Alanine--tRNA ligase, found in Thermococcus kodakarensis (strain ATCC BAA-918 / JCM 12380 / KOD1) (Pyrococcus kodakaraensis (strain KOD1)).